The following is a 418-amino-acid chain: UDP-N-acetylglucosamine 1-carboxyvinyltransferase (418 aa).

Phosphoenolpyruvate is bound at residue 22–23 (KN). Residue R91 coordinates UDP-N-acetyl-alpha-D-glucosamine. The active-site Proton donor is C115. 2-(S-cysteinyl)pyruvic acid O-phosphothioketal is present on C115. UDP-N-acetyl-alpha-D-glucosamine is bound by residues D305 and I327.

Belongs to the EPSP synthase family. MurA subfamily.

Its subcellular location is the cytoplasm. The enzyme catalyses phosphoenolpyruvate + UDP-N-acetyl-alpha-D-glucosamine = UDP-N-acetyl-3-O-(1-carboxyvinyl)-alpha-D-glucosamine + phosphate. Its pathway is cell wall biogenesis; peptidoglycan biosynthesis. Its function is as follows. Cell wall formation. Adds enolpyruvyl to UDP-N-acetylglucosamine. The sequence is that of UDP-N-acetylglucosamine 1-carboxyvinyltransferase from Aeromonas hydrophila subsp. hydrophila (strain ATCC 7966 / DSM 30187 / BCRC 13018 / CCUG 14551 / JCM 1027 / KCTC 2358 / NCIMB 9240 / NCTC 8049).